The chain runs to 273 residues: Putative phosphoenolpyruvate synthase regulatory protein (273 aa).

153 to 160 (GVSRSGKT) contributes to the ADP binding site.

It belongs to the pyruvate, phosphate/water dikinase regulatory protein family. PSRP subfamily.

It carries out the reaction [pyruvate, water dikinase] + ADP = [pyruvate, water dikinase]-phosphate + AMP + H(+). The catalysed reaction is [pyruvate, water dikinase]-phosphate + phosphate + H(+) = [pyruvate, water dikinase] + diphosphate. Functionally, bifunctional serine/threonine kinase and phosphorylase involved in the regulation of the phosphoenolpyruvate synthase (PEPS) by catalyzing its phosphorylation/dephosphorylation. This Delftia acidovorans (strain DSM 14801 / SPH-1) protein is Putative phosphoenolpyruvate synthase regulatory protein.